Consider the following 405-residue polypeptide: Putative polysaccharide ligase RP358 (405 aa).

The next 10 helical transmembrane spans lie at 23 to 43 (IAATVAFFLLSIIITGFISFI), 77 to 97 (LFTAWCFISCLFAVHPINSLV), 120 to 140 (VLYIKNSLILGIITAILLFFI), 156 to 178 (FGLYMLDRGCALLSITTWVAIII), 201 to 221 (ISDSLASFLGFSIGGIIFILA), 227 to 247 (IFFKLITISLITGSLLFPVIA), 270 to 290 (LFIWHFVANKIIIRPILGYGF), 322 to 342 (ILQITLELGILGLALFLCLVY), 353 to 375 (VSNFRAASYSCFINYYIIGMISY), and 377 to 397 (IWQTWWILSGIWILVLMKLLV).

It belongs to the O-antigen ligase family.

It localises to the membrane. The sequence is that of Putative polysaccharide ligase RP358 from Rickettsia prowazekii (strain Madrid E).